Here is an 892-residue protein sequence, read N- to C-terminus: Translation initiation factor IF-2 (892 aa).

The tract at residues 65 to 296 (KTRSTLNIPS…KGKRKPSTLQ (232 aa)) is disordered. A compositionally biased stretch (polar residues) spans 68-82 (STLNIPSTGGKSKSV). Positions 99–217 (EQAKAEEQAQ…KMAAENEGKW (119 aa)) are enriched in basic and acidic residues. Polar residues predominate over residues 224 to 237 (QTESADYHVTTSQH). Residues 239-254 (RAAEDENDAKVEGDRR) are compositionally biased toward basic and acidic residues. Positions 255–269 (SRTRGGKATKQKKGN) are enriched in basic residues. Over residues 270 to 283 (KLSESKADREEARA) the composition is skewed to basic and acidic residues. One can recognise a tr-type G domain in the interval 391 to 560 (HRAPVVTIMG…LLQAEVLELK (170 aa)). Residues 400 to 407 (GHVDHGKT) are G1. GTP is bound at residue 400–407 (GHVDHGKT). The tract at residues 425–429 (GITQH) is G2. The G3 stretch occupies residues 446-449 (DTPG). GTP is bound by residues 446-450 (DTPGH) and 500-503 (NKID). The interval 500–503 (NKID) is G4. A G5 region spans residues 536–538 (SAK).

The protein belongs to the TRAFAC class translation factor GTPase superfamily. Classic translation factor GTPase family. IF-2 subfamily.

It is found in the cytoplasm. Functionally, one of the essential components for the initiation of protein synthesis. Protects formylmethionyl-tRNA from spontaneous hydrolysis and promotes its binding to the 30S ribosomal subunits. Also involved in the hydrolysis of GTP during the formation of the 70S ribosomal complex. This Yersinia pseudotuberculosis serotype O:1b (strain IP 31758) protein is Translation initiation factor IF-2.